A 227-amino-acid polypeptide reads, in one-letter code: Thiamine-phosphate synthase (227 aa).

Residues 50-54 and Asp82 contribute to the 4-amino-2-methyl-5-(diphosphooxymethyl)pyrimidine site; that span reads QFRQK. Mg(2+)-binding residues include Asp83 and Asp102. Residue Thr121 coordinates 4-amino-2-methyl-5-(diphosphooxymethyl)pyrimidine. 147 to 149 lines the 2-[(2R,5Z)-2-carboxy-4-methylthiazol-5(2H)-ylidene]ethyl phosphate pocket; sequence TTS. Lys150 is a binding site for 4-amino-2-methyl-5-(diphosphooxymethyl)pyrimidine. 2-[(2R,5Z)-2-carboxy-4-methylthiazol-5(2H)-ylidene]ethyl phosphate contacts are provided by residues Gly178 and 198–199; that span reads LS.

Belongs to the thiamine-phosphate synthase family. It depends on Mg(2+) as a cofactor.

The enzyme catalyses 2-[(2R,5Z)-2-carboxy-4-methylthiazol-5(2H)-ylidene]ethyl phosphate + 4-amino-2-methyl-5-(diphosphooxymethyl)pyrimidine + 2 H(+) = thiamine phosphate + CO2 + diphosphate. It catalyses the reaction 2-(2-carboxy-4-methylthiazol-5-yl)ethyl phosphate + 4-amino-2-methyl-5-(diphosphooxymethyl)pyrimidine + 2 H(+) = thiamine phosphate + CO2 + diphosphate. It carries out the reaction 4-methyl-5-(2-phosphooxyethyl)-thiazole + 4-amino-2-methyl-5-(diphosphooxymethyl)pyrimidine + H(+) = thiamine phosphate + diphosphate. It participates in cofactor biosynthesis; thiamine diphosphate biosynthesis; thiamine phosphate from 4-amino-2-methyl-5-diphosphomethylpyrimidine and 4-methyl-5-(2-phosphoethyl)-thiazole: step 1/1. Functionally, condenses 4-methyl-5-(beta-hydroxyethyl)thiazole monophosphate (THZ-P) and 2-methyl-4-amino-5-hydroxymethyl pyrimidine pyrophosphate (HMP-PP) to form thiamine monophosphate (TMP). The polypeptide is Thiamine-phosphate synthase (Salinibacter ruber (strain DSM 13855 / M31)).